A 251-amino-acid polypeptide reads, in one-letter code: Blue-light absorbing proteorhodopsin (251 aa).

Positions 1 to 18 are cleaved as a signal peptide; the sequence is MGKLLLILGSAIALPSFA. The next 7 membrane-spanning stretches (helical) occupy residues 30-50, 65-85, 97-117, 120-140, 144-164, 190-210, and 223-243; these read VGVSFWLVTAGMLAATVFFFV, VSGLITGIAFWHYLYMRGVWI, IDWLLTVPLQVVEFYLILAAC, VAASLFKKLLAGSLVMLGAGF, AGLAPVLPAFIIGMAGWLYMI, MMMIIVVGWAIYPAGYAAGYL, and LIYNLADFVNKILFGLIIWNV. An N6-(retinylidene)lysine modification is found at Lys-233.

It belongs to the archaeal/bacterial/fungal opsin family. Post-translationally, contains one covalently linked retinal chromophore.

The protein localises to the cell membrane. Functionally, light-driven proton pump. May have a regulatory rather than energy harvesting function, based on light-induced opening of proton channels, to modulate cell physiology depending on light intensity variations. Could be, therefore, a sensory rhodopsin, potentially associated with a transducer component. The chain is Blue-light absorbing proteorhodopsin from Gamma-proteobacterium Hot 75m4.